Consider the following 83-residue polypeptide: Cytochrome b559 subunit alpha (83 aa).

The chain crosses the membrane as a helical span at residues 21-35 (VIHSITIPSLFIAGW). Heme is bound at residue histidine 23.

Belongs to the PsbE/PsbF family. In terms of assembly, heterodimer of an alpha subunit and a beta subunit. PSII is composed of 1 copy each of membrane proteins PsbA, PsbB, PsbC, PsbD, PsbE, PsbF, PsbH, PsbI, PsbJ, PsbK, PsbL, PsbM, PsbT, PsbX, PsbY, PsbZ, Psb30/Ycf12, at least 3 peripheral proteins of the oxygen-evolving complex and a large number of cofactors. It forms dimeric complexes. Heme b serves as cofactor.

It is found in the plastid. The protein localises to the chloroplast thylakoid membrane. Functionally, this b-type cytochrome is tightly associated with the reaction center of photosystem II (PSII). PSII is a light-driven water:plastoquinone oxidoreductase that uses light energy to abstract electrons from H(2)O, generating O(2) and a proton gradient subsequently used for ATP formation. It consists of a core antenna complex that captures photons, and an electron transfer chain that converts photonic excitation into a charge separation. The protein is Cytochrome b559 subunit alpha of Citrus sinensis (Sweet orange).